A 372-amino-acid polypeptide reads, in one-letter code: tRNA-specific 2-thiouridylase MnmA (372 aa).

Residues 7-14 and Met-33 contribute to the ATP site; that span reads GLSGGVDS. The segment at 104 to 106 is interaction with target base in tRNA; sequence NPD. Cys-109 serves as the catalytic Nucleophile. Cys-109 and Cys-202 are oxidised to a cystine. Gly-134 serves as a coordination point for ATP. The tract at residues 152–154 is interaction with tRNA; sequence KDQ. The Cysteine persulfide intermediate role is filled by Cys-202. The interaction with tRNA stretch occupies residues 310–311; the sequence is RY.

Belongs to the MnmA/TRMU family.

The protein localises to the cytoplasm. The enzyme catalyses S-sulfanyl-L-cysteinyl-[protein] + uridine(34) in tRNA + AH2 + ATP = 2-thiouridine(34) in tRNA + L-cysteinyl-[protein] + A + AMP + diphosphate + H(+). In terms of biological role, catalyzes the 2-thiolation of uridine at the wobble position (U34) of tRNA, leading to the formation of s(2)U34. The polypeptide is tRNA-specific 2-thiouridylase MnmA (Mesomycoplasma hyopneumoniae (strain 7448) (Mycoplasma hyopneumoniae)).